The primary structure comprises 311 residues: HPr kinase/phosphorylase (311 aa).

Catalysis depends on residues H139 and K160. 154–161 (GQSGVGKS) is an ATP binding site. Residue S161 participates in Mg(2+) binding. Catalysis depends on D178, which acts as the Proton acceptor; for phosphorylation activity. Proton donor; for dephosphorylation activity. The segment at 202–211 (LEIRGIGIID) is important for the catalytic mechanism of both phosphorylation and dephosphorylation. Residue E203 coordinates Mg(2+). The active site involves R244. The tract at residues 265-270 (PVRPGR) is important for the catalytic mechanism of dephosphorylation.

This sequence belongs to the HPrK/P family. Homohexamer. It depends on Mg(2+) as a cofactor.

It carries out the reaction [HPr protein]-L-serine + ATP = [HPr protein]-O-phospho-L-serine + ADP + H(+). The catalysed reaction is [HPr protein]-O-phospho-L-serine + phosphate + H(+) = [HPr protein]-L-serine + diphosphate. In terms of biological role, catalyzes the ATP- as well as the pyrophosphate-dependent phosphorylation of a specific serine residue in HPr, a phosphocarrier protein of the phosphoenolpyruvate-dependent sugar phosphotransferase system (PTS). HprK/P also catalyzes the pyrophosphate-producing, inorganic phosphate-dependent dephosphorylation (phosphorolysis) of seryl-phosphorylated HPr (P-Ser-HPr). The two antagonistic activities of HprK/P are regulated by several intracellular metabolites, which change their concentration in response to the absence or presence of rapidly metabolisable carbon sources (glucose, fructose, etc.) in the growth medium. Therefore, by controlling the phosphorylation state of HPr, HPrK/P is a sensor enzyme that plays a major role in the regulation of carbon metabolism and sugar transport: it mediates carbon catabolite repression (CCR), and regulates PTS-catalyzed carbohydrate uptake and inducer exclusion. This is HPr kinase/phosphorylase from Exiguobacterium sp. (strain ATCC BAA-1283 / AT1b).